Consider the following 255-residue polypeptide: Small ribosomal subunit protein eS1 (255 aa).

The span at 1 to 18 shows a compositional bias: basic residues; it reads MAVGKNKRLSKGKKGLKK. The interval 1 to 20 is disordered; sequence MAVGKNKRLSKGKKGLKKRV. Alanine 2 is modified (N-acetylalanine; partial).

The protein belongs to the eukaryotic ribosomal protein eS1 family. In terms of assembly, component of the small ribosomal subunit. Mature ribosomes consist of a small (40S) and a large (60S) subunit. The 40S subunit contains about 33 different proteins and 1 molecule of RNA (18S). The 60S subunit contains about 49 different proteins and 3 molecules of RNA (25S, 5.8S and 5S).

The protein resides in the cytoplasm. The sequence is that of Small ribosomal subunit protein eS1 from Coccidioides immitis (strain RS) (Valley fever fungus).